The sequence spans 232 residues: Small ribosomal subunit protein uS5 (232 aa).

Positions 1–47 are disordered; the sequence is MAAEVTETAQPVETAASTDNNREQREPRRGGRERNPNRDRGNRDADK. The span at 7-19 shows a compositional bias: polar residues; sequence ETAQPVETAASTD. Residues 20–47 are compositionally biased toward basic and acidic residues; that stretch reads NNREQREPRRGGRERNPNRDRGNRDADK. Positions 50–113 constitute an S5 DRBM domain; the sequence is FLERVVTINR…EEAKKNFFRV (64 aa).

The protein belongs to the universal ribosomal protein uS5 family. As to quaternary structure, part of the 30S ribosomal subunit. Contacts proteins S4 and S8.

With S4 and S12 plays an important role in translational accuracy. In terms of biological role, located at the back of the 30S subunit body where it stabilizes the conformation of the head with respect to the body. This Leifsonia xyli subsp. xyli (strain CTCB07) protein is Small ribosomal subunit protein uS5.